Here is a 233-residue protein sequence, read N- to C-terminus: DNA repair protein RecO (233 aa).

It belongs to the RecO family.

Involved in DNA repair and RecF pathway recombination. The polypeptide is DNA repair protein RecO (Pseudomonas aeruginosa (strain UCBPP-PA14)).